We begin with the raw amino-acid sequence, 54 residues long: Ribulose bisphosphate carboxylase large chain (54 aa).

The propeptide occupies 1–2; it reads MS. N-acetylproline is present on proline 3. Lysine 14 carries the N6,N6,N6-trimethyllysine modification.

It belongs to the RuBisCO large chain family. Type I subfamily. In terms of assembly, heterohexadecamer of 8 large chains and 8 small chains.

Its subcellular location is the plastid. It localises to the chloroplast. The enzyme catalyses 2 (2R)-3-phosphoglycerate + 2 H(+) = D-ribulose 1,5-bisphosphate + CO2 + H2O. It catalyses the reaction D-ribulose 1,5-bisphosphate + O2 = 2-phosphoglycolate + (2R)-3-phosphoglycerate + 2 H(+). Its function is as follows. RuBisCO catalyzes two reactions: the carboxylation of D-ribulose 1,5-bisphosphate, the primary event in carbon dioxide fixation, as well as the oxidative fragmentation of the pentose substrate in the photorespiration process. Both reactions occur simultaneously and in competition at the same active site. This is Ribulose bisphosphate carboxylase large chain (rbcL) from Ilex aquifolium (English holly).